Consider the following 91-residue polypeptide: Small ribosomal subunit protein uS15 (91 aa).

It belongs to the universal ribosomal protein uS15 family. As to quaternary structure, part of the 30S ribosomal subunit. Forms a bridge to the 50S subunit in the 70S ribosome, contacting the 23S rRNA.

In terms of biological role, one of the primary rRNA binding proteins, it binds directly to 16S rRNA where it helps nucleate assembly of the platform of the 30S subunit by binding and bridging several RNA helices of the 16S rRNA. Functionally, forms an intersubunit bridge (bridge B4) with the 23S rRNA of the 50S subunit in the ribosome. The sequence is that of Small ribosomal subunit protein uS15 from Rickettsia felis (strain ATCC VR-1525 / URRWXCal2) (Rickettsia azadi).